We begin with the raw amino-acid sequence, 343 residues long: MSKLRLGVLFGGRSQEHEVSVMSARSVVKMAKKEKYKVIPFGITKKGQWVGPEESWNILNNGINEVKASKDRCITESVRVFLDHKLDIVFPVLHGPYGEDGKLQGFLDCLDIPYIGASVLSSAAGMDKEIMKNLFSYHKIPQARYRVYRQNHLENGLDGIISEIDRFLGWPCFVKPANMGSSIGVSKVHSPGEVKKALEKGFYYDRKLIFEEFVEGREIECSVLGNDQVEASLPGEILPGKEFYDYEAKYKDNKTRLVIPASLDESVIDKARNLAIKAFKAIDGNGFARVDFFLKNNGVLLVNEINTIPGFTQYSMYPKLWEATGLNYPDLIDKLIELALEDR.

The 206-residue stretch at lysine 132–glutamate 337 folds into the ATP-grasp domain. Aspartate 165–glutamate 220 is a binding site for ATP. Aspartate 291, glutamate 304, and asparagine 306 together coordinate Mg(2+).

Belongs to the D-alanine--D-alanine ligase family. Mg(2+) is required as a cofactor. Requires Mn(2+) as cofactor.

The protein resides in the cytoplasm. The catalysed reaction is 2 D-alanine + ATP = D-alanyl-D-alanine + ADP + phosphate + H(+). The protein operates within cell wall biogenesis; peptidoglycan biosynthesis. In terms of biological role, cell wall formation. This chain is D-alanine--D-alanine ligase, found in Halothermothrix orenii (strain H 168 / OCM 544 / DSM 9562).